Reading from the N-terminus, the 257-residue chain is Acetylglutamate kinase (257 aa).

Substrate is bound by residues 41–42, Arg-63, and Asn-156; that span reads GG.

The protein belongs to the acetylglutamate kinase family. ArgB subfamily.

It localises to the cytoplasm. The enzyme catalyses N-acetyl-L-glutamate + ATP = N-acetyl-L-glutamyl 5-phosphate + ADP. It participates in amino-acid biosynthesis; L-arginine biosynthesis; N(2)-acetyl-L-ornithine from L-glutamate: step 2/4. Functionally, catalyzes the ATP-dependent phosphorylation of N-acetyl-L-glutamate. This chain is Acetylglutamate kinase, found in Geobacillus sp. (strain WCH70).